A 286-amino-acid polypeptide reads, in one-letter code: Aldo-keto reductase MAP_4149 (286 aa).

Catalysis depends on Tyr61, which acts as the Proton donor. Residues Leu201, Val203, Val239, Arg241, Ser242, Arg247, and Asn251 each coordinate NADPH.

Belongs to the aldo/keto reductase family.

The sequence is that of Aldo-keto reductase MAP_4149 from Mycolicibacterium paratuberculosis (strain ATCC BAA-968 / K-10) (Mycobacterium paratuberculosis).